The primary structure comprises 195 residues: Large ribosomal subunit protein uL18 (195 aa).

The protein belongs to the universal ribosomal protein uL18 family. In terms of assembly, part of the 50S ribosomal subunit. Contacts the 5S and 23S rRNAs.

This is one of the proteins that bind and probably mediate the attachment of the 5S RNA into the large ribosomal subunit, where it forms part of the central protuberance. This is Large ribosomal subunit protein uL18 from Nanoarchaeum equitans (strain Kin4-M).